The sequence spans 291 residues: ATP synthase gamma chain (291 aa).

The protein belongs to the ATPase gamma chain family. F-type ATPases have 2 components, CF(1) - the catalytic core - and CF(0) - the membrane proton channel. CF(1) has five subunits: alpha(3), beta(3), gamma(1), delta(1), epsilon(1). CF(0) has three main subunits: a, b and c.

The protein localises to the cell inner membrane. Its function is as follows. Produces ATP from ADP in the presence of a proton gradient across the membrane. The gamma chain is believed to be important in regulating ATPase activity and the flow of protons through the CF(0) complex. In Neisseria meningitidis serogroup B (strain ATCC BAA-335 / MC58), this protein is ATP synthase gamma chain.